The sequence spans 382 residues: Succinate--CoA ligase [ADP-forming] subunit beta (382 aa).

The region spanning 9 to 240 (KELFSKYGVK…PRDVTEFEAY (232 aa)) is the ATP-grasp domain. Residues Lys-45, 52–54 (GRG), Val-94, and Glu-99 each bind ATP. The Mg(2+) site is built by Asn-193 and Asp-207. Residues Asn-260 and 317–319 (GIT) each bind substrate.

This sequence belongs to the succinate/malate CoA ligase beta subunit family. As to quaternary structure, heterotetramer of two alpha and two beta subunits. The cofactor is Mg(2+).

The enzyme catalyses succinate + ATP + CoA = succinyl-CoA + ADP + phosphate. It catalyses the reaction GTP + succinate + CoA = succinyl-CoA + GDP + phosphate. The protein operates within carbohydrate metabolism; tricarboxylic acid cycle; succinate from succinyl-CoA (ligase route): step 1/1. Functionally, succinyl-CoA synthetase functions in the citric acid cycle (TCA), coupling the hydrolysis of succinyl-CoA to the synthesis of either ATP or GTP and thus represents the only step of substrate-level phosphorylation in the TCA. The beta subunit provides nucleotide specificity of the enzyme and binds the substrate succinate, while the binding sites for coenzyme A and phosphate are found in the alpha subunit. This Pyrobaculum aerophilum (strain ATCC 51768 / DSM 7523 / JCM 9630 / CIP 104966 / NBRC 100827 / IM2) protein is Succinate--CoA ligase [ADP-forming] subunit beta.